The chain runs to 276 residues: uncharacterized protein (276 aa).

The active-site Proton donor is Y47. Position 110 (H110) interacts with substrate.

The protein belongs to the aldo/keto reductase family.

It is found in the cytoplasm. It localises to the nucleus. This is an uncharacterized protein from Schizosaccharomyces pombe (strain 972 / ATCC 24843) (Fission yeast).